We begin with the raw amino-acid sequence, 638 residues long: Keratin, type II cytoskeletal 2 oral (638 aa).

Residues Met-1–Gln-182 are head. 2 positions are modified to omega-N-methylarginine: Arg-85 and Arg-110. The interval Glu-183–Leu-218 is coil 1A. Residues Glu-183–Met-496 form the IF rod domain. The segment at Gln-219–Tyr-237 is linker 1. The segment at Ile-238–Met-329 is coil 1B. A linker 12 region spans residues Gln-330 to Ile-353. Residues Ile-354–Glu-492 are coil 2. The tail stretch occupies residues Glu-493 to Lys-638. The disordered stretch occupies residues Ser-532–Lys-638. Low complexity predominate over residues Gly-540–Tyr-549. Gly residues predominate over residues Gly-550–Ser-572. The segment covering Ser-573 to Ser-583 has biased composition (low complexity). Arg-584 carries the post-translational modification Omega-N-methylarginine. The span at Ser-590–Ser-608 shows a compositional bias: low complexity. Gly residues predominate over residues Gly-609 to Ser-620. The span at Ser-626–Lys-638 shows a compositional bias: low complexity.

This sequence belongs to the intermediate filament family. As to quaternary structure, heterotetramer of two type I and two type II keratins.

Probably contributes to terminal cornification. The sequence is that of Keratin, type II cytoskeletal 2 oral (KRT76) from Homo sapiens (Human).